The chain runs to 396 residues: MGALDDLRVLDLTQVLAGPYCTMLLADMGADVVKVERPGGDLIRSNPPFVSDGDEEAYGGYFQSVNRGKRSLELDLGTDEDREAFLSLVERADVVVENFKAGTMEKFDCGYETLREHNPDLIYSSIRGFGDPRTGETHRQGQPSFDLIAQALGGVMEITGQSDGPPTKVGPGVGDLFTAVLNAVGILAAVHHRERTGEGQYVDTAMYDSMVSLCERTVYQYSCDGESPTRQGNSHPTLFPYDSFEAADGHVVIAAFADGHWETLCEAMERPDLAADYPDAGSRIANRESLRREIADWTATIDSETLLDLLEGRVPAAPVQNTADIFDDPHIHDREMLTDVDQPGADEQITIAGSPIKMTETMPSPGGRAPLLDEHRAELLDEAGVGTGTNRVESDD.

Residue Asp-175 is the Nucleophile of the active site.

Belongs to the CoA-transferase III family. In terms of assembly, homodimer.

It carries out the reaction mesaconate + succinyl-CoA = 2-methylfumaryl-CoA + succinate. Its activity is regulated as follows. Shows highest activity at 4 M KCl. Does not require divalent ions for activity. Involved in the methylaspartate cycle. Catalyzes the transfer of the CoA moiety from succinyl-CoA to mesaconate to generate mesaconyl-CoA (2-methylfumaryl-CoA) and succinate. Also shows high activity with methylsuccinate as CoA-acceptor, and only low activity with glutarate, acrylate and itaconate. Cannot use other CoA donors like acetyl-CoA, propionyl-CoA, butyryl-CoA or acetoacetyl-CoA. This chain is Succinyl-CoA:mesaconate CoA-transferase, found in Haloarcula hispanica (strain ATCC 33960 / DSM 4426 / JCM 8911 / NBRC 102182 / NCIMB 2187 / VKM B-1755).